The following is a 504-amino-acid chain: Cytochrome P450 2D10 (504 aa).

Ser-249 carries the phosphoserine modification. Cys-446 is a binding site for heme.

The protein belongs to the cytochrome P450 family. Heme is required as a cofactor.

The protein resides in the endoplasmic reticulum membrane. Its subcellular location is the microsome membrane. The enzyme catalyses an organic molecule + reduced [NADPH--hemoprotein reductase] + O2 = an alcohol + oxidized [NADPH--hemoprotein reductase] + H2O + H(+). Functionally, cytochromes P450 are a group of heme-thiolate monooxygenases. In liver microsomes, this enzyme is involved in an NADPH-dependent electron transport pathway. It oxidizes a variety of structurally unrelated compounds, including steroids, fatty acids, and xenobiotics. The sequence is that of Cytochrome P450 2D10 (Cyp2d10) from Mus musculus (Mouse).